Reading from the N-terminus, the 291-residue chain is Stem 31 kDa glycoprotein (291 aa).

A glycan (N-linked (GlcNAc...) asparagine) is linked at Asn126.

Accumulates in the stems of developing soybean seedlings.

Functionally, may function as somatic storage protein during early seedling development. This Glycine max (Soybean) protein is Stem 31 kDa glycoprotein (VSP25).